Here is a 148-residue protein sequence, read N- to C-terminus: Endoribonuclease YbeY (148 aa).

3 residues coordinate Zn(2+): histidine 105, histidine 109, and aspartate 115.

This sequence belongs to the endoribonuclease YbeY family. It depends on Zn(2+) as a cofactor.

It localises to the cytoplasm. In terms of biological role, single strand-specific metallo-endoribonuclease involved in late-stage 70S ribosome quality control and in maturation of the 3' terminus of the 16S rRNA. In Chlorobium phaeovibrioides (strain DSM 265 / 1930) (Prosthecochloris vibrioformis (strain DSM 265)), this protein is Endoribonuclease YbeY.